Reading from the N-terminus, the 217-residue chain is GRB2-related adapter protein (217 aa).

The region spanning 1–58 is the SH3 1 domain; sequence MESVALYSFQATESDELAFNKGDTLKILNMEDDQNWYKAELRGAEGFVPKNYIRVKPH. The SH2 domain maps to 60–152; the sequence is WYSGRISRQL…RRQIFLCDEQ (93 aa). In terms of domain architecture, SH3 2 spans 158-217; the sequence is SRACFAQAQFDFSAQDPSQLSLRRGDIVEVVEREDPHWWRGRAGGRLGFFPRSYVQPVHL.

It belongs to the GRB2/sem-5/DRK family. In terms of assembly, associates through its SH2 domain with ligand-activated receptors for stem cell factor (KIT) and erythropoietin (EPOR). Also forms a stable complex with the Bcr-Abl oncoprotein. GRAP is associated with the Ras guanine nucleotide exchange factor SOS1, primarily through its N-terminal SH3 domain. Interacts with phosphorylated LAT upon TCR activation. Interacts with SHB. As to expression, expressed in inner ear, in neruonal fibers innervating cochlear and utricular auditory hair cells (at protein level).

Its subcellular location is the membrane. The protein resides in the synapse. Its function is as follows. Couples signals from receptor and cytoplasmic tyrosine kinases to the Ras signaling pathway. Plays a role in the inner ear and in hearing. This chain is GRB2-related adapter protein, found in Mus musculus (Mouse).